The primary structure comprises 327 residues: Diacylglycerol acyltransferase/mycolyltransferase Ag85B (327 aa).

Residues methionine 1–alanine 38 form the signal peptide. A substrate-binding site is contributed by leucine 80–arginine 81. The interval phenylalanine 96–valine 106 is fibronectin-binding. An intrachain disulfide couples cysteine 125 to cysteine 130. The substrate site is built by serine 164 and aspartate 192. Serine 164 (nucleophile) is an active-site residue. The active site involves glutamate 268. Substrate-binding positions include phenylalanine 270–glycine 273, lysine 277, and histidine 300–tryptophan 302. The active site involves histidine 300.

This sequence belongs to the mycobacterial A85 antigen family.

Its subcellular location is the secreted. It catalyses the reaction 2 alpha,alpha'-trehalose 6-mycolate = alpha,alpha'-trehalose 6,6'-bismycolate + alpha,alpha-trehalose. It carries out the reaction an acyl-CoA + a 1,2-diacyl-sn-glycerol = a triacyl-sn-glycerol + CoA. In terms of biological role, the antigen 85 proteins (FbpA, FbpB, FbpC) are responsible for the high affinity of mycobacteria for fibronectin, a large adhesive glycoprotein, which facilitates the attachment of M.tuberculosis to murine alveolar macrophages (AMs). They also help to maintain the integrity of the cell wall by catalyzing the transfer of mycolic acids to cell wall arabinogalactan and through the synthesis of alpha,alpha-trehalose dimycolate (TDM, cord factor). They catalyze the transfer of a mycoloyl residue from one molecule of alpha,alpha-trehalose monomycolate (TMM) to another TMM, leading to the formation of TDM. This is Diacylglycerol acyltransferase/mycolyltransferase Ag85B (fbpB) from Mycobacterium leprae (strain TN).